Reading from the N-terminus, the 280-residue chain is Protein MGF 505-3R (280 aa).

The protein belongs to the asfivirus MGF 505 family.

Its function is as follows. Plays a role in virus cell tropism, and may be required for efficient virus replication in macrophages. The sequence is that of Protein MGF 505-3R from African swine fever virus (isolate Warthog/Namibia/Wart80/1980) (ASFV).